The primary structure comprises 466 residues: ATP synthase subunit beta (466 aa).

148-155 (GGAGVGKT) lines the ATP pocket.

It belongs to the ATPase alpha/beta chains family. In terms of assembly, F-type ATPases have 2 components, CF(1) - the catalytic core - and CF(0) - the membrane proton channel. CF(1) has five subunits: alpha(3), beta(3), gamma(1), delta(1), epsilon(1). CF(0) has three main subunits: a(1), b(2) and c(9-12). The alpha and beta chains form an alternating ring which encloses part of the gamma chain. CF(1) is attached to CF(0) by a central stalk formed by the gamma and epsilon chains, while a peripheral stalk is formed by the delta and b chains.

The protein resides in the cell inner membrane. The catalysed reaction is ATP + H2O + 4 H(+)(in) = ADP + phosphate + 5 H(+)(out). In terms of biological role, produces ATP from ADP in the presence of a proton gradient across the membrane. The catalytic sites are hosted primarily by the beta subunits. The polypeptide is ATP synthase subunit beta (Xylella fastidiosa (strain M23)).